A 613-amino-acid polypeptide reads, in one-letter code: 9-cis-epoxycarotenoid dioxygenase NCED5, chloroplastic (613 aa).

Residues 1–15 (MPTTFTPNSPASSCS) show a composition bias toward polar residues. Residues 1 to 36 (MPTTFTPNSPASSCSIHHRASPSRGARNSVRFTRPR) constitute a chloroplast transit peptide. The disordered stretch occupies residues 1–62 (MPTTFTPNSP…PPAYVPPPPP (62 aa)). Positions 37–50 (AAAAATNSVLSAPS) are enriched in low complexity. Over residues 51–62 (SVPPAYVPPPPP) the composition is skewed to pro residues. H305, H354, H419, and H600 together coordinate Fe cation.

Belongs to the carotenoid oxygenase family. Fe(2+) is required as a cofactor.

It localises to the plastid. It is found in the chloroplast. The catalysed reaction is a 9-cis-epoxycarotenoid + O2 = a 12'-apo-carotenal + 2-cis,4-trans-xanthoxin. It catalyses the reaction 9-cis-violaxanthin + O2 = (3S,5R,6S)-5,6-epoxy-3-hydroxy-5,6-dihydro-12'-apo-beta-caroten-12'-al + 2-cis,4-trans-xanthoxin. The enzyme catalyses 9'-cis-neoxanthin + O2 = (3S,5R,6R)-3,5-dihydroxy-6,7-didehydro-5,6-dihydro-12'-apo-beta-caroten-12'-al + 2-cis,4-trans-xanthoxin. In terms of biological role, has a 11,12(11',12') 9-cis epoxycarotenoid cleavage activity. Catalyzes the first step of abscisic-acid biosynthesis from carotenoids. This Oryza sativa subsp. japonica (Rice) protein is 9-cis-epoxycarotenoid dioxygenase NCED5, chloroplastic.